Reading from the N-terminus, the 363-residue chain is Protein-glutamate methylesterase/protein-glutamine glutaminase of group 3 operon (363 aa).

Positions 7 to 124 (RVLIVDDSAS…RQALMESSGR (118 aa)) constitute a Response regulatory domain. Asp58 is modified (4-aspartylphosphate). The CheB-type methylesterase domain maps to 166 to 357 (PTTERIVCIG…REIMAWQQAK (192 aa)). Residues Ser177, His203, and Asp299 contribute to the active site.

It belongs to the CheB family. Phosphorylated by CheA. Phosphorylation of the N-terminal regulatory domain activates the methylesterase activity.

The protein resides in the cytoplasm. It carries out the reaction [protein]-L-glutamate 5-O-methyl ester + H2O = L-glutamyl-[protein] + methanol + H(+). It catalyses the reaction L-glutaminyl-[protein] + H2O = L-glutamyl-[protein] + NH4(+). Functionally, involved in chemotaxis. Part of a chemotaxis signal transduction system that modulates chemotaxis in response to various stimuli. Catalyzes the demethylation of specific methylglutamate residues introduced into the chemoreceptors (methyl-accepting chemotaxis proteins or MCP) by CheR. Also mediates the irreversible deamidation of specific glutamine residues to glutamic acid. In Rhodopseudomonas palustris (strain ATCC BAA-98 / CGA009), this protein is Protein-glutamate methylesterase/protein-glutamine glutaminase of group 3 operon.